Here is a 331-residue protein sequence, read N- to C-terminus: C-type lectin domain family 4 member K (331 aa).

Over 1–41 (MPEAEMKEEAPEAHFTVDKQNISLWPREPPPKQDLSPVLRK) the chain is Cytoplasmic. The chain crosses the membrane as a helical; Signal-anchor for type II membrane protein span at residues 42–62 (PLCICVAFTCLALVLVTSIVL). The Extracellular portion of the chain corresponds to 63-331 (QAVFYPRLMG…CKRPYVQTTE (269 aa)). Asn90 and Asn116 each carry an N-linked (GlcNAc...) asparagine glycan. A coiled-coil region spans residues 106–197 (DDAEVQMQIV…LKQQSDILEM (92 aa)). In terms of domain architecture, C-type lectin spans 205 to 323 (FSGNFYYFSR…CDNTFLFICK (119 aa)). Cystine bridges form between Cys226/Cys322 and Cys298/Cys314.

In terms of assembly, homotrimer. Expressed by Langerhans cells. Expressed in dendritic cells and by scattered cells in lymph nodes and spleen. Also detected in some non-lymphoid tissues such as lung, liver and heart.

The protein localises to the membrane. In terms of biological role, calcium-dependent lectin displaying mannose-binding specificity. Induces the formation of Birbeck granules (BGs); is a potent regulator of membrane superimposition and zippering. Binds to sulfated as well as mannosylated glycans, keratan sulfate (KS) and beta-glucans. Facilitates uptake of antigens and is involved in the routing and/or processing of antigen for presentation to T cells. The polypeptide is C-type lectin domain family 4 member K (Cd207) (Mus musculus (Mouse)).